Here is a 440-residue protein sequence, read N- to C-terminus: uncharacterized protein (440 aa).

12 helical membrane passes run 24–44, 47–67, 93–113, 117–137, 155–175, 183–203, 229–249, 276–296, 323–343, 346–366, 379–399, and 400–420; these read VVIGLGSMIGAGIFAALAPAA, AGSGLLLGLAVAAVVAYCNAI, FWGYLAGWGFVVGKTASCAAM, VGFYVWPAQAHAVAVAVVVAL, IVAVVLVVLTAVVVAAYGSGA, IGVDAHVWGMLQAAGLLFFAF, LALGITLAVYALVAVAVIAVL, VVQIGAAVAALGSLLALILGV, PFRAELVVGAVVAALAATADI, AIGFSSFGVLVYYAIANASAL, IPLVGLIGCVVLAFALPLSSV, and AAGAAVLGVGVAAYGVRRIIT.

It belongs to the amino acid-polyamine-organocation (APC) superfamily.

It is found in the cell membrane. In terms of biological role, probable amino-acid or metabolite transport protein. This is an uncharacterized protein from Mycobacterium bovis (strain ATCC BAA-935 / AF2122/97).